A 551-amino-acid chain; its full sequence is Chaperonin GroEL (551 aa).

Residues 30 to 33 (TLGP), Lys-51, 87 to 91 (DGTTT), Gly-415, and Asp-496 contribute to the ATP site.

It belongs to the chaperonin (HSP60) family. Forms a cylinder of 14 subunits composed of two heptameric rings stacked back-to-back. Interacts with the co-chaperonin GroES.

The protein localises to the cytoplasm. The enzyme catalyses ATP + H2O + a folded polypeptide = ADP + phosphate + an unfolded polypeptide.. Functionally, together with its co-chaperonin GroES, plays an essential role in assisting protein folding. The GroEL-GroES system forms a nano-cage that allows encapsulation of the non-native substrate proteins and provides a physical environment optimized to promote and accelerate protein folding. In Maricaulis maris (strain MCS10) (Caulobacter maris), this protein is Chaperonin GroEL.